The following is a 66-amino-acid chain: MKAKEIRELTTAEIEQKIKALKEELFNLRFQLATGQLENTARIRQVRKDIARMKTIIRERELAANK.

This sequence belongs to the universal ribosomal protein uL29 family.

The chain is Large ribosomal subunit protein uL29 from Geobacillus kaustophilus (strain HTA426).